A 131-amino-acid polypeptide reads, in one-letter code: Insertion element IS1 protein InsB (131 aa).

This sequence belongs to the transposase 27 family.

In terms of biological role, absolutely required for transposition of IS1. This Shigella flexneri protein is Insertion element IS1 protein InsB (insB1).